Consider the following 1080-residue polypeptide: Protein transport protein SEC24 C (1080 aa).

Residues 1 to 10 are compositionally biased toward pro residues; sequence MVAPVPPGAP. Disordered stretches follow at residues 1–189, 201–220, and 316–367; these read MVAP…SGMI, GSGGFPRGTQFPGAAVTTPQ, and TAMG…SDYV. The span at 12–43 shows a compositional bias: polar residues; that stretch reads PNSQQNSGPPNFYPGSQGNSNALADNMQNLSL. Positions 45 to 70 are enriched in pro residues; the sequence is RPPPMMPGSGPRPPPPFGQSPQPFPQ. Low complexity-rich tracts occupy residues 71-84, 142-160, and 178-189; these read QSPSYGAPQRGPSP, PAASSSGFPAFGPSGSVAA, and GSGMSMPPSGMI. Residues 340–356 show a composition bias toward polar residues; that stretch reads GSSSSPTVFETRQSNQA. Zn(2+) contacts are provided by C430, C433, C452, and C455. A zinc finger-like region spans residues 430–455; the sequence is CSRCKGYINPFMKFIDQGRKFICNFC.

It belongs to the SEC23/SEC24 family. SEC24 subfamily. As to quaternary structure, component of the coat protein complex II (COPII), composed of at least five proteins: the Sec23/24 complex, the Sec13/31 complex and Sar1. Mainly expressed at low levels in pollen, leaves, roots and stems.

The protein resides in the cytoplasmic vesicle. Its subcellular location is the COPII-coated vesicle membrane. It is found in the endoplasmic reticulum membrane. The protein localises to the golgi apparatus membrane. In terms of biological role, component of the coat protein complex II (COPII), that covers ER-derived vesicles involved in transport from the endoplasmic reticulum to the Golgi apparatus. COPII is composed of at least five proteins: the SEC23/24 complex, the SEC13/31 complex, and the protein SAR1. Acts in the cytoplasm to promote the transport of secretory, plasma membrane, and vacuolar proteins from the endoplasmic reticulum to the Golgi complex. This Arabidopsis thaliana (Mouse-ear cress) protein is Protein transport protein SEC24 C.